Reading from the N-terminus, the 412-residue chain is UPF0754 membrane protein MAE_37850 (412 aa).

The next 2 helical transmembrane spans lie at 3 to 23 (LPTL…GYFT) and 387 to 407 (IVNL…IILI).

Belongs to the UPF0754 family.

It is found in the cell inner membrane. This Microcystis aeruginosa (strain NIES-843 / IAM M-2473) protein is UPF0754 membrane protein MAE_37850.